Reading from the N-terminus, the 85-residue chain is Large ribosomal subunit protein bL31B (85 aa).

This sequence belongs to the bacterial ribosomal protein bL31 family. Type B subfamily. As to quaternary structure, part of the 50S ribosomal subunit.

This is Large ribosomal subunit protein bL31B from Serratia proteamaculans (strain 568).